The following is a 357-amino-acid chain: GTPase Obg (357 aa).

Positions 1–159 (MKFVDEAEIQ…RTLKLELKLL (159 aa)) constitute an Obg domain. One can recognise an OBG-type G domain in the interval 160–343 (ADIGMLGFPN…IMKSAMTLFE (184 aa)). GTP-binding positions include 166-173 (GFPNVGKS), 191-195 (FTTLY), 213-216 (DVPG), 293-296 (NKAD), and 324-326 (SAV). Mg(2+) is bound by residues serine 173 and threonine 193.

It belongs to the TRAFAC class OBG-HflX-like GTPase superfamily. OBG GTPase family. As to quaternary structure, monomer. Mg(2+) serves as cofactor.

It is found in the cytoplasm. Its function is as follows. An essential GTPase which binds GTP, GDP and possibly (p)ppGpp with moderate affinity, with high nucleotide exchange rates and a fairly low GTP hydrolysis rate. Plays a role in control of the cell cycle, stress response, ribosome biogenesis and in those bacteria that undergo differentiation, in morphogenesis control. This is GTPase Obg from Xylella fastidiosa (strain M12).